Reading from the N-terminus, the 643-residue chain is Inorganic pyrophosphatase TTM1 (643 aa).

Residues 1–15 constitute a mitochondrion transit peptide; sequence MALDSSVALSPRRRH. A CYTH domain is found at 248–410; that stretch reads NPTYILKSSK…PHTYIEQIQL (163 aa). The helical transmembrane segment at 618–638 threads the bilayer; sequence LESSTVPILLGLAIGCVGIFA.

Mg(2+) is required as a cofactor. In terms of tissue distribution, ubiquitously expressed in all tissues, with strong expression detected in senescent leaves.

It localises to the mitochondrion outer membrane. The catalysed reaction is diphosphate + H2O = 2 phosphate + H(+). Exhibits pyrophosphatase activity with stronger affinity for pyrophosphate (PPi), moderate affinity for ATP and ADP, and weak affinity for tripolyphosphate (PPPi). No activity observed toward uridine substrate. Positively regulates natural and dark-induced leaf senescence. The sequence is that of Inorganic pyrophosphatase TTM1 from Arabidopsis thaliana (Mouse-ear cress).